A 43-amino-acid polypeptide reads, in one-letter code: Protein PsbN (43 aa).

A helical transmembrane segment spans residues 5–27 (TLFAISISCLLVSFTGYALYTAF).

The protein belongs to the PsbN family.

Its subcellular location is the plastid. The protein localises to the chloroplast thylakoid membrane. May play a role in photosystem I and II biogenesis. This is Protein PsbN from Thuja plicata (Western red-cedar).